Consider the following 265-residue polypeptide: Mycothiol acetyltransferase (265 aa).

N-acetyltransferase domains follow at residues 1–110 (MDDL…PPLP) and 118–265 (VSVR…YVRG). A 1D-myo-inositol 2-(L-cysteinylamino)-2-deoxy-alpha-D-glucopyranoside-binding site is contributed by aspartate 3. An acetyl-CoA-binding site is contributed by 44–46 (VQV). Glutamate 145, arginine 185, and glutamate 198 together coordinate 1D-myo-inositol 2-(L-cysteinylamino)-2-deoxy-alpha-D-glucopyranoside. Residues 202 to 204 (LGV) and 209 to 215 (HCKGLGK) contribute to the acetyl-CoA site. Tyrosine 236 contributes to the 1D-myo-inositol 2-(L-cysteinylamino)-2-deoxy-alpha-D-glucopyranoside binding site.

Belongs to the acetyltransferase family. MshD subfamily. In terms of assembly, monomer.

It catalyses the reaction 1D-myo-inositol 2-(L-cysteinylamino)-2-deoxy-alpha-D-glucopyranoside + acetyl-CoA = mycothiol + CoA + H(+). In terms of biological role, catalyzes the transfer of acetyl from acetyl-CoA to desacetylmycothiol (Cys-GlcN-Ins) to form mycothiol. The polypeptide is Mycothiol acetyltransferase (Segniliparus rotundus (strain ATCC BAA-972 / CDC 1076 / CIP 108378 / DSM 44985 / JCM 13578)).